The primary structure comprises 296 residues: GTPase Era (296 aa).

An Era-type G domain is found at 7-173 (KAGFVSIIGR…VDLVREHLPE (167 aa)). Residues 15 to 22 (GRPNVGKS) form a G1 region. Residue 15–22 (GRPNVGKS) coordinates GTP. The segment at 41–45 (QTTRN) is G2. The tract at residues 62 to 65 (DTPG) is G3. GTP is bound by residues 62-66 (DTPGI) and 122-125 (NKID). Residues 122 to 125 (NKID) are G4. Residues 152-154 (ISA) are G5. The KH type-2 domain occupies 204–281 (TNREVPYGTA…YLELFVQVQE (78 aa)).

The protein belongs to the TRAFAC class TrmE-Era-EngA-EngB-Septin-like GTPase superfamily. Era GTPase family. In terms of assembly, monomer.

The protein localises to the cytoplasm. Its subcellular location is the cell inner membrane. In terms of biological role, an essential GTPase that binds both GDP and GTP, with rapid nucleotide exchange. Plays a role in 16S rRNA processing and 30S ribosomal subunit biogenesis and possibly also in cell cycle regulation and energy metabolism. The polypeptide is GTPase Era (Trichlorobacter lovleyi (strain ATCC BAA-1151 / DSM 17278 / SZ) (Geobacter lovleyi)).